A 423-amino-acid polypeptide reads, in one-letter code: Kynurenine--oxoglutarate transaminase 1 (423 aa).

Gly-36 provides a ligand contact to substrate. At Lys-82 the chain carries N6-succinyllysine. A substrate-binding site is contributed by Asn-185. The residue at position 247 (Lys-247) is an N6-(pyridoxal phosphate)lysine. Arg-398 contacts substrate.

Belongs to the class-I pyridoxal-phosphate-dependent aminotransferase family. In terms of assembly, homodimer. The cofactor is pyridoxal 5'-phosphate. As to expression, detected in kidney.

Its subcellular location is the cytoplasm. It localises to the cytosol. The protein resides in the mitochondrion matrix. The catalysed reaction is L-kynurenine + 2-oxoglutarate = kynurenate + L-glutamate + H2O. The enzyme catalyses 3-phenylpyruvate + L-glutamine = 2-oxoglutaramate + L-phenylalanine. It carries out the reaction an S-substituted L-cysteine + H2O = a thiol + pyruvate + NH4(+). Its pathway is amino-acid degradation; L-kynurenine degradation; kynurenate from L-kynurenine: step 1/2. Its activity is regulated as follows. Inhibited by aminooxyacetate (in vitro). Functionally, catalyzes the irreversible transamination of the L-tryptophan metabolite L-kynurenine to form kynurenic acid (KA), an intermediate in the tryptophan catabolic pathway which is also a broad spectrum antagonist of the three ionotropic excitatory amino acid receptors among others. Metabolizes the cysteine conjugates of certain halogenated alkenes and alkanes to form reactive metabolites. Catalyzes the beta-elimination of S-conjugates and Se-conjugates of L-(seleno)cysteine, resulting in the cleavage of the C-S or C-Se bond. The protein is Kynurenine--oxoglutarate transaminase 1 of Rattus norvegicus (Rat).